Reading from the N-terminus, the 217-residue chain is N-(5'-phosphoribosyl)anthranilate isomerase (217 aa).

It belongs to the TrpF family.

It carries out the reaction N-(5-phospho-beta-D-ribosyl)anthranilate = 1-(2-carboxyphenylamino)-1-deoxy-D-ribulose 5-phosphate. It participates in amino-acid biosynthesis; L-tryptophan biosynthesis; L-tryptophan from chorismate: step 3/5. This Synechococcus elongatus (strain ATCC 33912 / PCC 7942 / FACHB-805) (Anacystis nidulans R2) protein is N-(5'-phosphoribosyl)anthranilate isomerase.